Reading from the N-terminus, the 392-residue chain is HORMA domain-containing protein 1 (392 aa).

In terms of domain architecture, HORMA spans 25–227; it reads QQSLMFVKRL…TPFHTFRLKV (203 aa). 2 disordered regions span residues 271 to 292 and 371 to 392; these read IKTKMNEQNENSGTSEIKEPNL and LESSSQESVLKRRRVSEPNEHT. Ser374 bears the Phosphoserine mark. Residues 381 to 384 carry the Nuclear localization signal motif; sequence KRRR.

As to quaternary structure, interacts with HORMAD2. Interacts with IHO1. Post-translationally, phosphorylated at Ser-375 in a SPO11-dependent manner.

The protein localises to the nucleus. Its subcellular location is the chromosome. Functionally, plays a key role in meiotic progression. Regulates 3 different functions during meiosis: ensures that sufficient numbers of processed DNA double-strand breaks (DSBs) are available for successful homology search by increasing the steady-state numbers of single-stranded DSB ends. Promotes synaptonemal-complex formation independently of its role in homology search. Plays a key role in the male mid-pachytene checkpoint and the female meiotic prophase checkpoint: required for efficient build-up of ATR activity on unsynapsed chromosome regions, a process believed to form the basis of meiotic silencing of unsynapsed chromatin (MSUC) and meiotic prophase quality control in both sexes. The sequence is that of HORMA domain-containing protein 1 (Hormad1) from Rattus norvegicus (Rat).